The primary structure comprises 149 residues: Transcriptional repressor NrdR (149 aa).

Residues 3-34 (CPFCATDDTKVVDSRLTADGYQIRRRRECPVC) fold into a zinc finger. The 91-residue stretch at 49–139 (PHIVKNNGSR…VYLSFDDVEE (91 aa)) folds into the ATP-cone domain.

This sequence belongs to the NrdR family. Requires Zn(2+) as cofactor.

In terms of biological role, negatively regulates transcription of bacterial ribonucleotide reductase nrd genes and operons by binding to NrdR-boxes. In Glaesserella parasuis serovar 5 (strain SH0165) (Haemophilus parasuis), this protein is Transcriptional repressor NrdR.